The chain runs to 293 residues: Ankyrin repeat and SOCS box protein 11 (293 aa).

ANK repeat units follow at residues 36–65, 69–98, 102–131, 134–163, 167–196, 199–228, and 232–259; these read DDRT…NVGM, DGIT…DANA, DGAT…AHHP, LLCS…NVDM, SVGT…DVQC, GLDT…DRTS, and EGKT…SLSQ. One can recognise an SOCS box domain in the interval 244 to 293; it reads SIKHLLQTAGTCSLSQLCRWCIRRSLGQKGLNKTKTLCLPHMLHNYLLYH.

This sequence belongs to the ankyrin SOCS box (ASB) family. Substrate-recognition component of the ECS(ASB11) complex, composed of asb11, cul5, elob, eloc and rnf7/rbx2. In terms of tissue distribution, expressed in the developing nervous system: localizes to neural plate margins and is abutting the proneuronal zone.

It is found in the endoplasmic reticulum. The protein operates within protein modification; protein ubiquitination. Its function is as follows. Substrate-recognition component of a cullin-5-RING E3 ubiquitin-protein ligase complex (ECS complex, also named CRL5 complex), which mediates the ubiquitination and subsequent proteasomal degradation of target proteins. Acts as a regulator of the neuronal progenitor compartment size by maintaining the neural precursors in the proliferating undifferentiated state. The ECS(ASB11) complex acts as a positive regulator of Notch signaling pathway by mediating ubiquitination and degradation of DeltaA (dla). Also acts as a regulator of regenerative myogenesis. In Danio rerio (Zebrafish), this protein is Ankyrin repeat and SOCS box protein 11.